We begin with the raw amino-acid sequence, 362 residues long: E3 ubiquitin-protein ligase rififylin (362 aa).

Positions 17–37 (ETPPPQGARTQAYSNPGYSSF) are disordered. Polar residues predominate over residues 24–37 (ARTQAYSNPGYSSF). An FYVE-type zinc finger spans residues 41–93 (TGSEPSCKACGVHFASTTRKQTCLDCKKNFCMTCSSQEGNGPRLCLLCLRFRA). In terms of domain architecture, SAP 1 spans 101-120 (LMKMKVKDLRDYLSLHDIST). The disordered stretch occupies residues 162–183 (LTQPQSSTVPPTSPGLPSSPAQ). Phosphoserine is present on residues Ser-225, Ser-228, Ser-231, and Ser-239. Residues 249–263 (IEGLTVRQLKEILAR) form the SAP 2 domain. The RING-type zinc-finger motif lies at 315-350 (CKICMDSPIDCVLLECGHMVTCTKCGKRMNECPICR).

Interacts with CASP8 and CASP10. Interacts with RIPK1 (via protein kinase domain); involved in RIPK1 ubiquitination. Interacts with PRR5L. Interacts (via RING-type zinc finger) with p53/TP53; involved in p53/TP53 ubiquitination. Interacts (via RING-type zinc finger) with MDM2; the interaction stabilizes MDM2. In terms of processing, autoubiquitinated. Palmitoylated. Post-translationally, undergoes caspase-mediated cleavage upon death-receptor activation, by TNFSF10 for instance. May be mediated by the caspases CASP8 and CASP10 in a negative feedback loop. As to expression, ubiquitous. Detected in cerebrum, cerebellum, midbrain, brain stem, hippocampus, striatum, liver, heart, lung, kidney, muscle, spleen and testis.

The protein localises to the cytoplasm. It is found in the cytosol. Its subcellular location is the cell membrane. It localises to the recycling endosome membrane. It carries out the reaction S-ubiquitinyl-[E2 ubiquitin-conjugating enzyme]-L-cysteine + [acceptor protein]-L-lysine = [E2 ubiquitin-conjugating enzyme]-L-cysteine + N(6)-ubiquitinyl-[acceptor protein]-L-lysine.. Its pathway is protein modification; protein ubiquitination. Functionally, E3 ubiquitin-protein ligase that regulates several biological processes through the ubiquitin-mediated proteasomal degradation of various target proteins. Mediates 'Lys-48'-linked polyubiquitination of PRR5L and its subsequent proteasomal degradation thereby indirectly regulating cell migration through the mTORC2 complex. Also ubiquitinates the caspases CASP8 and CASP10, promoting their proteasomal degradation, to negatively regulate apoptosis downstream of death domain receptors. Also negatively regulates the tumor necrosis factor-mediated signaling pathway through targeting of RIPK1 to ubiquitin-mediated proteasomal degradation. Negatively regulates p53/TP53 through its direct ubiquitination and targeting to proteasomal degradation. Indirectly, may also negatively regulate p53/TP53 through ubiquitination and degradation of SFN. May also play a role in endocytic recycling. This is E3 ubiquitin-protein ligase rififylin from Rattus norvegicus (Rat).